Reading from the N-terminus, the 841-residue chain is Translation initiation factor IF-2 (841 aa).

Basic and acidic residues-rich tracts occupy residues 1 to 12 (MSDNEIKNEAPK), 52 to 92 (ALKA…EATK), 114 to 170 (EQPK…REEA), 188 to 202 (READ…EANR), and 213 to 235 (KKGD…DVKG). Disordered stretches follow at residues 1 to 24 (MSDN…KTTV) and 52 to 246 (ALKA…GSAL). Residues 340–510 (TRAPVVTIMG…LLQSEVLELT (171 aa)) form the tr-type G domain. Positions 349-356 (GHVDHGKT) are G1. 349–356 (GHVDHGKT) lines the GTP pocket. The tract at residues 374–378 (GITQH) is G2. The interval 396–399 (DTPG) is G3. GTP is bound by residues 396-400 (DTPGH) and 450-453 (NKID). The tract at residues 450–453 (NKID) is G4. Positions 486 to 488 (SAK) are G5.

This sequence belongs to the TRAFAC class translation factor GTPase superfamily. Classic translation factor GTPase family. IF-2 subfamily.

The protein localises to the cytoplasm. Its function is as follows. One of the essential components for the initiation of protein synthesis. Protects formylmethionyl-tRNA from spontaneous hydrolysis and promotes its binding to the 30S ribosomal subunits. Also involved in the hydrolysis of GTP during the formation of the 70S ribosomal complex. This Actinobacillus pleuropneumoniae serotype 5b (strain L20) protein is Translation initiation factor IF-2.